Consider the following 273-residue polypeptide: Thiazole synthase (273 aa).

The active-site Schiff-base intermediate with DXP is Lys-110. 1-deoxy-D-xylulose 5-phosphate-binding positions include Gly-171, 197-198, and 219-220; these read AG and NT. The interval 251-273 is disordered; the sequence is MAAQDSAQPSTPVLGTPFWHHAP.

This sequence belongs to the ThiG family. In terms of assembly, homotetramer. Forms heterodimers with either ThiH or ThiS.

The protein resides in the cytoplasm. The catalysed reaction is [ThiS sulfur-carrier protein]-C-terminal-Gly-aminoethanethioate + 2-iminoacetate + 1-deoxy-D-xylulose 5-phosphate = [ThiS sulfur-carrier protein]-C-terminal Gly-Gly + 2-[(2R,5Z)-2-carboxy-4-methylthiazol-5(2H)-ylidene]ethyl phosphate + 2 H2O + H(+). It participates in cofactor biosynthesis; thiamine diphosphate biosynthesis. In terms of biological role, catalyzes the rearrangement of 1-deoxy-D-xylulose 5-phosphate (DXP) to produce the thiazole phosphate moiety of thiamine. Sulfur is provided by the thiocarboxylate moiety of the carrier protein ThiS. In vitro, sulfur can be provided by H(2)S. This chain is Thiazole synthase, found in Variovorax paradoxus (strain S110).